We begin with the raw amino-acid sequence, 140 residues long: Endoribonuclease YbeY (140 aa).

Zn(2+) is bound by residues His-100, His-104, and His-110.

The protein belongs to the endoribonuclease YbeY family. It depends on Zn(2+) as a cofactor.

The protein localises to the cytoplasm. In terms of biological role, single strand-specific metallo-endoribonuclease involved in late-stage 70S ribosome quality control and in maturation of the 3' terminus of the 16S rRNA. The polypeptide is Endoribonuclease YbeY (Helicobacter pylori (strain P12)).